The chain runs to 456 residues: GTPase Der (456 aa).

EngA-type G domains lie at 3–167 (FTIA…PPSD) and 185–360 (IRVA…AVWN). Residues 9 to 16 (GRPNVGKS), 56 to 60 (DTAGL), and 119 to 122 (NKSE) contribute to the GTP site. The interval 162 to 181 (IVPPSDDEDDEREETDEERA) is disordered. Acidic residues predominate over residues 166–178 (SDDEDDEREETDE). Residues 191–198 (GRPNAGKS), 238–242 (DTAGL), and 303–306 (NKWD) contribute to the GTP site. The 85-residue stretch at 361–445 (RRVPTAALNR…PVRITLREKA (85 aa)) folds into the KH-like domain.

Belongs to the TRAFAC class TrmE-Era-EngA-EngB-Septin-like GTPase superfamily. EngA (Der) GTPase family. As to quaternary structure, associates with the 50S ribosomal subunit.

In terms of biological role, GTPase that plays an essential role in the late steps of ribosome biogenesis. In Bradyrhizobium sp. (strain ORS 278), this protein is GTPase Der.